Here is a 144-residue protein sequence, read N- to C-terminus: Large ribosomal subunit protein uL11 (144 aa).

It belongs to the universal ribosomal protein uL11 family. In terms of assembly, part of the ribosomal stalk of the 50S ribosomal subunit. Interacts with L10 and the large rRNA to form the base of the stalk. L10 forms an elongated spine to which L12 dimers bind in a sequential fashion forming a multimeric L10(L12)X complex. One or more lysine residues are methylated.

In terms of biological role, forms part of the ribosomal stalk which helps the ribosome interact with GTP-bound translation factors. The polypeptide is Large ribosomal subunit protein uL11 (Deinococcus deserti (strain DSM 17065 / CIP 109153 / LMG 22923 / VCD115)).